A 649-amino-acid polypeptide reads, in one-letter code: Putative cystathionine gamma-synthase YML082W (649 aa).

The disordered stretch occupies residues 242 to 273; sequence NEANHGEDHDGGISGEVDSQEEPHNGLVSTIP. S287 is modified (phosphoserine). K451 is modified (N6-(pyridoxal phosphate)lysine).

This sequence belongs to the trans-sulfuration enzymes family. MET7 subfamily. Pyridoxal 5'-phosphate is required as a cofactor.

It carries out the reaction O-succinyl-L-homoserine + L-cysteine = L,L-cystathionine + succinate + H(+). It functions in the pathway amino-acid biosynthesis; L-methionine biosynthesis via de novo pathway; L-cystathionine from O-succinyl-L-homoserine: step 1/1. In terms of biological role, catalyzes the formation of L-cystathionine from O-succinyl-L-homoserine (OSHS) and L-cysteine, via a gamma-replacement reaction. In the absence of thiol, catalyzes gamma-elimination to form 2-oxobutanoate, succinate and ammonia. In Saccharomyces cerevisiae (strain ATCC 204508 / S288c) (Baker's yeast), this protein is Putative cystathionine gamma-synthase YML082W.